The chain runs to 2522 residues: MYRIGLLVLIWSLLGLAQGLRCTQTAEMCLNGGRCEMTPGGTGVCLCSSSYFGERCQYPNPCALKNQCMNFGTCEPVLLGNAIDFTCHCPVGFTDKVCLTPVDNACVNNPCRNGGTCELLSSVSDYRCRCPPGWTGDSCQQADPCASNPCANGGKCLPFETQYICKCPSGFHGATCKQDINECSQNPCRNGGQCLNEFGSYRCNCQNRFTGRNCEEPYVPCNPSPCLNGGTCRQTDDTSYECTCLPGFSGQNCEENIDDCPSNNCRNGGTCVDGVNTYNCQCPPDWTGQYCTEDVDECQLMPNACQNGGTCHNTYGGYNCVCVNGWTGEDCSENIDDCANAACHSGATCHDRVASFFCECPHGRTGLLCHLDNACISNPCNEGSNCDTNPVNGKAICTCPPGYTGPACNNDVDECSLGANPCEHGGRCTNTLGSFQCNCPQGYAGPRCEIDVNECLSNPCQNDATCLDQIGEFQCICMPGYEGLYCETNIDECASNPCLHNGKCVDKINEFHCECPTGFNGNLCQHDVDECASTPCKNGAKCLDGPNSYTCQCTEGFTGRHCEQDINECIPDPCHYGTCKDGIATFTCLCRPGYTGRLCDNDINECLSQPCQNGGQCTDRENGYICTCPKGTTGVNCETNLDDCASNPCDYGKCIDKIDGYECTCEPGYTGKMCNINIDECASNPCRNGGTCKDKINGFTCVCPDGYHDHMCLSEVNECNSNPCIHGTCHDGINGYKCDCDAGWSGSNCDVNNNECESNPCMNGGTCKDMTGAYICTCRAGFSGPNCQTNINECASNPCLNRGTCIDDVAGYKCNCMLPYTGAICEAVLAPCSGSPCKNGGRCKESEDYETFSCECPPGWQGQTCEIDMNECVNRPCRNGAMCQNTNGSYKCNCKPGYAGRHCETDIDDCQPNPCHNGGSCSDGINMFFCNCPAGFRGPKCEEDINECASNPCKNGANCTDCVNSYTCTCQPGFSGIHCENNTPDCTESSCFNGGTCIDGINTFSCQCPPGFTGNYCQHDINECDSKPCLNGGTCQDSYGAYKCTCPQGYTGLNCQNLVRWCDSSPCKNGGKCWQTNNFYRCECKSGWTGVYCDVPSVSCEVAAKQQGVDIAHLCRNSGMCVDTGNTHFCRCQAGYTGSYCEEQVDECSPNPCQNGATCTDYLGGYSCECVAGYHGVNCSEEINECLSHPCHNGGTCIDLINTYKCSCPRGTQGVHCEINVDDCTPFYDSVSLEPKCFNNGKCFDRVGGYNCICPPGFVGERCEGDVNECLSNPCDPRGTQNCIQLVNDYRCECRQGFTGRRCDSVVDGCKGLPCRNGGTCAVASNTERGFICKCPPGFDGATCEYDARTCGNLRCQNGGTCISVLKSSKCVCSEGYTGATCQYPVVSPCASRPCYNGGTCQFSPEEPFFQCFCPTNFNGLFCHILDYGFIGGLGKNITPPDNEEICENEQCAELADNKICNANCNNHACGWDGGDCSLNFNDPWKNCTQSLQCWKYFNDGKCDSQCNNSGCLYDGFDCQKVEVQCNPLYDQYCRDHFQDGHCDQGCNNAECEWDGLDCDNMPENLAEGTLLIVVLMPPEKLKNNSVNFLRELSRVLHTNVVFKKDSKGEYKIYPYYGNEEELKKHHIKKRSAASWSDAPTAIFSTMKESVLPGRRRRELDQMEVRGSIVYLEIDNRQCYKSSSQCFTSATDVAAFLGALATHGNLNIPYKIEAVKSEIVETAKPPPPLYAMFSMLVIPLLIIFVIMVVIVNKKRRREHGQLWFPEGFIPKEPSKKKRREPLGEDSVGLKPLKNLTDGSFMDDNQNEWGDEETLENKRFRFEEQVMLPELVDDQTDHRQWTQQHLDAADLRIPSMAPTPPQGEIDADCMDVNVRGPDGFTPLMIAACSGGGLETGNSEEEEDASANMISDFIGQGAQLHNQTDRTGETALHLAARYARADAAKRLLESSADANVPDNMGRTPLHAAVAADAQGVFQILIRNRATDLDARMCDGTTPLILAARLAVEGMVEELINAHADVNAVDEFGKSALHWAAAVNNVDAAAVLLKSSANKDMQNNKEETPLFLAAREGSYETAKVLLDHYANRDITDHMDRLPRDIAQERMHHDIVHLLDEHNLVKSPTLHGGPLGAPTLSPPICSPNGYMGNMKPSVQSKKARKPSIKGNGCKEAKELKARRKKSQDGKTSLLDSGSSGVLSPVDSLESPHGYLSDVASPPLMTSPFQQSPSMPLNHLTSMQDSHLGLNHMTMANKQEMASNRMAFDGMTPRLTHLNVSSPNTIMTNGSMHFTVGGAPAMNGQCDWFARLQNGMVQNQYNPIRNGIQQGNAQQALQHGLMSSLHNGLPATTLSQMMTYQAMPNTRMANQPHLMQAQQMQQQQNLQLHQSVQQQQHQNSNATSTHIGSPFCSNDISQTDLQQMSGNNIHSVMPQDTQIFTNSLPPTLTQSMATTQFLTPPSQHSYSSPMDNTPSHQLQVPDHPFLTPSPESPDQWSSSSPHSNMSDWSEGISSPPTSMQPQRTHIPEAFK.

The signal sequence occupies residues 1–19; sequence MYRIGLLVLIWSLLGLAQG. EGF-like domains lie at 20-57, 58-99, 102-140, and 141-177; these read LRCTQTAEMCLNGGRCEMTPGGTGVCLCSSSYFGERCQ, YPNP…KVCL, VDNACVNNPCRNGGTCELLSSVSDYRCRCPPGWTGDSCQ, and QADPCASNPCANGGKCLPFETQYICKCPSGFHGATCK. The Extracellular portion of the chain corresponds to 20–1730; it reads LRCTQTAEMC…ETAKPPPPLY (1711 aa). 33 disulfides stabilise this stretch: Cys22–Cys35, Cys29–Cys45, Cys47–Cys56, Cys62–Cys74, Cys68–Cys87, Cys89–Cys98, Cys106–Cys117, Cys111–Cys128, Cys130–Cys139, Cys145–Cys156, Cys150–Cys165, Cys167–Cys176, Cys183–Cys194, Cys188–Cys203, Cys205–Cys214, Cys221–Cys232, Cys226–Cys242, Cys244–Cys253, Cys260–Cys271, Cys265–Cys280, Cys282–Cys291, Cys298–Cys311, Cys305–Cys320, Cys322–Cys331, Cys338–Cys349, Cys343–Cys358, Cys360–Cys369, Cys375–Cys386, Cys380–Cys397, Cys399–Cys408, Cys415–Cys428, Cys422–Cys437, and Cys439–Cys448. One can recognise an EGF-like 5; calcium-binding domain in the interval 179-215; sequence DINECSQNPCRNGGQCLNEFGSYRCNCQNRFTGRNCE. The 38-residue stretch at 217–254 folds into the EGF-like 6 domain; the sequence is PYVPCNPSPCLNGGTCRQTDDTSYECTCLPGFSGQNCE. O-linked (Fuc...) threonine; alternate glycosylation occurs at Thr231. The O-linked (GalNAc...) threonine; alternate glycan is linked to Thr231. Positions 256-292 constitute an EGF-like 7; calcium-binding domain; it reads NIDDCPSNNCRNGGTCVDGVNTYNCQCPPDWTGQYCT. Positions 294–332 constitute an EGF-like 8; calcium-binding domain; it reads DVDECQLMPNACQNGGTCHNTYGGYNCVCVNGWTGEDCS. The 37-residue stretch at 334–370 folds into the EGF-like 9; calcium-binding domain; sequence NIDDCANAACHSGATCHDRVASFFCECPHGRTGLLCH. Residues 371–409 form the EGF-like 10 domain; the sequence is LDNACISNPCNEGSNCDTNPVNGKAICTCPPGYTGPACN. Residues 411 to 449 enclose the EGF-like 11; calcium-binding domain; sequence DVDECSLGANPCEHGGRCTNTLGSFQCNCPQGYAGPRCE. Ca(2+)-binding residues include Thr431 and Ser434. Ser434 is a glycosylation site (O-linked (Glc...) serine). Residues Asp451, Val452, and Glu454 each coordinate Ca(2+). The EGF-like 12; calcium-binding domain maps to 451–487; the sequence is DVNECLSNPCQNDATCLDQIGEFQCICMPGYEGLYCE. 3 disulfides stabilise this stretch: Cys455–Cys466, Cys460–Cys475, and Cys477–Cys486. The O-linked (Glc...) serine glycan is linked to Ser457. An O-linked (Fuc...) threonine glycan is attached at Thr465. Residues Asp468 and Gln469 each contribute to the Ca(2+) site. Positions 489, 490, and 492 each coordinate Ca(2+). In terms of domain architecture, EGF-like 13; calcium-binding spans 489–525; it reads NIDECASNPCLHNGKCVDKINEFHCECPTGFNGNLCQ. Disulfide bonds link Cys493–Cys504, Cys498–Cys513, Cys515–Cys524, Cys531–Cys542, Cys536–Cys551, Cys553–Cys562, Cys569–Cys579, Cys574–Cys588, Cys590–Cys599, Cys606–Cys617, Cys611–Cys626, Cys628–Cys637, Cys644–Cys654, Cys649–Cys663, Cys665–Cys674, Cys681–Cys692, Cys686–Cys701, Cys703–Cys712, Cys719–Cys729, Cys724–Cys738, Cys740–Cys749, Cys756–Cys767, Cys761–Cys776, Cys778–Cys787, Cys794–Cys805, Cys799–Cys814, Cys816–Cys825, Cys832–Cys843, Cys837–Cys854, Cys856–Cys865, Cys872–Cys883, Cys877–Cys892, Cys894–Cys903, Cys910–Cys921, Cys915–Cys930, Cys932–Cys941, Cys948–Cys959, Cys953–Cys968, Cys970–Cys979, Cys986–Cys997, Cys991–Cys1006, Cys1008–Cys1017, Cys1024–Cys1035, Cys1029–Cys1044, Cys1046–Cys1055, Cys1062–Cys1073, Cys1067–Cys1082, Cys1084–Cys1093, Cys1100–Cys1121, Cys1115–Cys1130, Cys1132–Cys1141, Cys1148–Cys1159, Cys1153–Cys1168, Cys1170–Cys1179, Cys1186–Cys1197, Cys1191–Cys1206, Cys1208–Cys1217, Cys1224–Cys1243, Cys1237–Cys1252, Cys1254–Cys1263, Cys1270–Cys1283, Cys1275–Cys1292, Cys1294–Cys1303, Cys1310–Cys1321, Cys1315–Cys1333, Cys1335–Cys1344, Cys1351–Cys1362, Cys1356–Cys1371, Cys1373–Cys1382, Cys1390–Cys1401, Cys1395–Cys1412, Cys1414–Cys1423, Cys1447–Cys1470, Cys1452–Cys1465, and Cys1461–Cys1477. Ser495 is a glycosylation site (O-linked (Glc...) serine). Residues Asp506 and Lys507 each coordinate Ca(2+). One can recognise an EGF-like 14; calcium-binding domain in the interval 527-563; the sequence is DVDECASTPCKNGAKCLDGPNSYTCQCTEGFTGRHCE. In terms of domain architecture, EGF-like 15; calcium-binding spans 565-600; it reads DINECIPDPCHYGTCKDGIATFTCLCRPGYTGRLCD. The EGF-like 16; calcium-binding domain maps to 602–638; it reads DINECLSQPCQNGGQCTDRENGYICTCPKGTTGVNCE. In terms of domain architecture, EGF-like 17; calcium-binding spans 640-675; that stretch reads NLDDCASNPCDYGKCIDKIDGYECTCEPGYTGKMCN. An EGF-like 18; calcium-binding domain is found at 677-713; that stretch reads NIDECASNPCRNGGTCKDKINGFTCVCPDGYHDHMCL. Residues 715 to 750 enclose the EGF-like 19; calcium-binding domain; sequence EVNECNSNPCIHGTCHDGINGYKCDCDAGWSGSNCD. The EGF-like 20; calcium-binding domain maps to 752-788; sequence NNNECESNPCMNGGTCKDMTGAYICTCRAGFSGPNCQ. Positions 790–826 constitute an EGF-like 21; calcium-binding domain; that stretch reads NINECASNPCLNRGTCIDDVAGYKCNCMLPYTGAICE. In terms of domain architecture, EGF-like 22 spans 828 to 866; the sequence is VLAPCSGSPCKNGGRCKESEDYETFSCECPPGWQGQTCE. One can recognise an EGF-like 23; calcium-binding domain in the interval 868–904; that stretch reads DMNECVNRPCRNGAMCQNTNGSYKCNCKPGYAGRHCE. N-linked (GlcNAc...) asparagine glycosylation occurs at Asn887. Positions 906–942 constitute an EGF-like 24; calcium-binding domain; it reads DIDDCQPNPCHNGGSCSDGINMFFCNCPAGFRGPKCE. In terms of domain architecture, EGF-like 25; calcium-binding spans 944–980; that stretch reads DINECASNPCKNGANCTDCVNSYTCTCQPGFSGIHCE. N-linked (GlcNAc...) asparagine glycosylation is present at Asn958. Residues 982–1018 enclose the EGF-like 26 domain; sequence NTPDCTESSCFNGGTCIDGINTFSCQCPPGFTGNYCQ. The EGF-like 27; calcium-binding domain occupies 1020 to 1056; sequence DINECDSKPCLNGGTCQDSYGAYKCTCPQGYTGLNCQ. 2 EGF-like domains span residues 1058–1094 and 1096–1142; these read LVRWCDSSPCKNGGKCWQTNNFYRCECKSGWTGVYCD and PSVS…SYCE. The region spanning 1144-1180 is the EGF-like 30; calcium-binding domain; the sequence is QVDECSPNPCQNGATCTDYLGGYSCECVAGYHGVNCS. Residue Asn1178 is glycosylated (N-linked (GlcNAc...) asparagine). An EGF-like 31; calcium-binding domain is found at 1182-1218; it reads EINECLSHPCHNGGTCIDLINTYKCSCPRGTQGVHCE. One can recognise an EGF-like 32; calcium-binding domain in the interval 1220-1264; sequence NVDDCTPFYDSVSLEPKCFNNGKCFDRVGGYNCICPPGFVGERCE. EGF-like domains follow at residues 1266–1304, 1306–1345, 1347–1383, and 1386–1424; these read DVNECLSNPCDPRGTQNCIQLVNDYRCECRQGFTGRRCD, VVDGCKGLPCRNGGTCAVASNTERGFICKCPPGFDGATCE, DARTCGNLRCQNGGTCISVLKSSKCVCSEGYTGATCQ, and VVSPCASRPCYNGGTCQFSPEEPFFQCFCPTNFNGLFCH. A glycan (O-linked (Fuc...) threonine; alternate) is linked at Thr1400. Thr1400 carries an O-linked (GalNAc...) threonine; alternate glycan. LNR repeat units follow at residues 1447 to 1487, 1488 to 1529, and 1530 to 1564; these read CENE…PWKN, CTQS…CNPL, and YDQYCRDHFQDGHCDQGCNNAECEWDGLDCDNMPE. Residues Asn1458, Asp1473, and Asp1476 each contribute to the Ca(2+) site. The N-linked (GlcNAc...) asparagine glycan is linked to Asn1487. Disulfide bonds link Cys1488–Cys1512, Cys1494–Cys1507, Cys1503–Cys1519, Cys1534–Cys1547, and Cys1543–Cys1559. Asp1500 contributes to the Ca(2+) binding site. A glycan (N-linked (GlcNAc...) asparagine) is linked at Asn1508. Ca(2+) is bound by residues Asp1515, Asp1518, Asp1540, Asp1555, and Asp1558. A glycan (N-linked (GlcNAc...) asparagine) is linked at Asn1584. Residues 1731–1751 traverse the membrane as a helical segment; that stretch reads AMFSMLVIPLLIIFVIMVVIV. The Cytoplasmic portion of the chain corresponds to 1752 to 2522; it reads NKKRRREHGQ…QRTHIPEAFK (771 aa). ANK repeat units lie at residues 1877-1920, 1925-1954, 1958-1988, 1992-2021, 2025-2054, and 2058-2087; these read DGFT…QLHN, TGETALHLAARYARADAAKRLLESSADANV, MGRTPLHAAVAADAQGVFQILIRNRATDLDA, DGTTPLILAARLAVEGMVEELINAHADVNA, FGKSALHWAAAVNNVDAAAVLLKSSANKDM, and KEETPLFLAAREGSYETAKVLLDHYANRDI. Disordered stretches follow at residues 2146-2229, 2365-2404, and 2449-2522; these read MKPS…MPLN, LMQAQQMQQQQNLQLHQSVQQQQHQNSNATSTHIGSPFCS, and LTPP…EAFK. Over residues 2184–2200 the composition is skewed to low complexity; sequence SLLDSGSSGVLSPVDSL. Positions 2218–2229 are enriched in polar residues; it reads SPFQQSPSMPLN. The span at 2365-2390 shows a compositional bias: low complexity; sequence LMQAQQMQQQQNLQLHQSVQQQQHQN. 2 stretches are compositionally biased toward polar residues: residues 2391 to 2404 and 2449 to 2469; these read SNATSTHIGSPFCS and LTPPSQHSYSSPMDNTPSHQL. Positions 2479–2494 are enriched in low complexity; the sequence is PSPESPDQWSSSSPHS. The segment covering 2495–2514 has biased composition (polar residues); the sequence is NMSDWSEGISSPPTSMQPQR.

Belongs to the NOTCH family. Post-translationally, O-glycosylated on the EGF-like domains. Contains both O-linked fucose and O-linked glucose. O-linked glycosylation by galnt11 is involved in determination of left/right symmetry: glycosylation promotes activation of notch1, possibly by promoting cleavage by adam17, modulating the balance between motile and immotile (sensory) cilia at the left-right organiser (LRO). In terms of processing, synthesized in the endoplasmic reticulum as an inactive form which is proteolytically cleaved by a furin-like convertase in the trans-Golgi network before it reaches the plasma membrane to yield an active, ligand-accessible form. Cleavage results in a C-terminal fragment N(TM) and a N-terminal fragment N(EC). Following ligand binding, it is cleaved by adam17 to yield a membrane-associated intermediate fragment called notch extracellular truncation (NEXT). Following endocytosis, this fragment is then cleaved by presenilin dependent gamma-secretase to release a Notch-derived peptide containing the intracellular domain (NICD) from the membrane.

The protein localises to the cell membrane. It is found in the nucleus. In terms of biological role, functions as a receptor for membrane-bound ligands Jagged-1 (JAG1), Jagged-2 (JAG2) and Delta-1 (DLL1) to regulate cell-fate determination. Upon ligand activation through the released notch intracellular domain (NICD) it forms a transcriptional activator complex with RBPJ/RBPSUH and activates genes of the enhancer of split locus. Affects the implementation of differentiation, proliferation and apoptotic programs. Involved in angiogenesis; negatively regulates endothelial cell proliferation and migration and angiogenic sprouting. Involved in the maturation of both CD4(+) and CD8(+) cells in the thymus. Important for follicular differentiation and possibly cell fate selection within the follicle. During cerebellar development, functions as a receptor for neuronal DNER and is involved in the differentiation of Bergmann glia. Represses neuronal and myogenic differentiation. May play an essential role in postimplantation development, probably in some aspect of cell specification and/or differentiation. May be involved in mesoderm development, somite formation and neurogenesis. Involved in determination of left/right symmetry by modulating the balance between motile and immotile (sensory) cilia at the left-right organiser (LRO). In Xenopus tropicalis (Western clawed frog), this protein is Neurogenic locus notch homolog protein 1 (notch1).